The following is a 507-amino-acid chain: ATP synthase subunit alpha, chloroplastic (507 aa).

Residue 170–177 coordinates ATP; sequence GDRQTGKT. A Phosphothreonine modification is found at threonine 257.

Belongs to the ATPase alpha/beta chains family. F-type ATPases have 2 components, CF(1) - the catalytic core - and CF(0) - the membrane proton channel. CF(1) has five subunits: alpha(3), beta(3), gamma(1), delta(1), epsilon(1). CF(0) has four main subunits: a, b, b' and c.

Its subcellular location is the plastid. The protein resides in the chloroplast thylakoid membrane. The catalysed reaction is ATP + H2O + 4 H(+)(in) = ADP + phosphate + 5 H(+)(out). Functionally, produces ATP from ADP in the presence of a proton gradient across the membrane. The alpha chain is a regulatory subunit. The chain is ATP synthase subunit alpha, chloroplastic from Lepidium virginicum (Virginia pepperweed).